The sequence spans 367 residues: 3-isopropylmalate dehydrogenase (367 aa).

Residue 75–88 (GPKWDGIERSKRPE) coordinates NAD(+). The substrate site is built by Arg95, Arg105, Arg133, and Asp230. Mg(2+) contacts are provided by Asp230, Asp254, and Asp258. 288–300 (GSAPDIAGQDIAN) contacts NAD(+).

It belongs to the isocitrate and isopropylmalate dehydrogenases family. LeuB type 1 subfamily. In terms of assembly, homodimer. Mg(2+) serves as cofactor. Mn(2+) is required as a cofactor.

Its subcellular location is the cytoplasm. The catalysed reaction is (2R,3S)-3-isopropylmalate + NAD(+) = 4-methyl-2-oxopentanoate + CO2 + NADH. Its pathway is amino-acid biosynthesis; L-leucine biosynthesis; L-leucine from 3-methyl-2-oxobutanoate: step 3/4. In terms of biological role, catalyzes the oxidation of 3-carboxy-2-hydroxy-4-methylpentanoate (3-isopropylmalate) to 3-carboxy-4-methyl-2-oxopentanoate. The product decarboxylates to 4-methyl-2 oxopentanoate. This chain is 3-isopropylmalate dehydrogenase, found in Psychrobacter cryohalolentis (strain ATCC BAA-1226 / DSM 17306 / VKM B-2378 / K5).